Reading from the N-terminus, the 218-residue chain is Large ribosomal subunit protein uL3 (218 aa).

This sequence belongs to the universal ribosomal protein uL3 family. Part of the 50S ribosomal subunit. Forms a cluster with proteins L14 and L19.

Functionally, one of the primary rRNA binding proteins, it binds directly near the 3'-end of the 23S rRNA, where it nucleates assembly of the 50S subunit. The protein is Large ribosomal subunit protein uL3 of Corynebacterium aurimucosum (strain ATCC 700975 / DSM 44827 / CIP 107346 / CN-1) (Corynebacterium nigricans).